We begin with the raw amino-acid sequence, 506 residues long: SPbeta prophage-derived uncharacterized protein YonE (506 aa).

Residues 473–506 are disordered; that stretch reads YTFTGNEVGRPNEGNKNNDNTVKSATSNGNDNPI. Polar residues predominate over residues 486–506; sequence GNKNNDNTVKSATSNGNDNPI.

This is SPbeta prophage-derived uncharacterized protein YonE (yonE) from Bacillus subtilis (strain 168).